The chain runs to 333 residues: Holliday junction branch migration complex subunit RuvB (333 aa).

The large ATPase domain (RuvB-L) stretch occupies residues 1-182 (MDERLLSQSH…FGVTLKLEYY (182 aa)). Residues leucine 21, arginine 22, glycine 63, lysine 66, threonine 67, threonine 68, 129 to 131 (EDY), arginine 172, tyrosine 182, and arginine 219 each bind ATP. Threonine 67 contributes to the Mg(2+) binding site. Residues 183–253 (ETHELAAIVS…LASDALDRLH (71 aa)) are small ATPAse domain (RuvB-S). Residues 256–333 (ALGLDEVDHR…SHFGYEEEEE (78 aa)) are head domain (RuvB-H). DNA contacts are provided by arginine 311 and arginine 316.

It belongs to the RuvB family. As to quaternary structure, homohexamer. Forms an RuvA(8)-RuvB(12)-Holliday junction (HJ) complex. HJ DNA is sandwiched between 2 RuvA tetramers; dsDNA enters through RuvA and exits via RuvB. An RuvB hexamer assembles on each DNA strand where it exits the tetramer. Each RuvB hexamer is contacted by two RuvA subunits (via domain III) on 2 adjacent RuvB subunits; this complex drives branch migration. In the full resolvosome a probable DNA-RuvA(4)-RuvB(12)-RuvC(2) complex forms which resolves the HJ.

The protein resides in the cytoplasm. It carries out the reaction ATP + H2O = ADP + phosphate + H(+). In terms of biological role, the RuvA-RuvB-RuvC complex processes Holliday junction (HJ) DNA during genetic recombination and DNA repair, while the RuvA-RuvB complex plays an important role in the rescue of blocked DNA replication forks via replication fork reversal (RFR). RuvA specifically binds to HJ cruciform DNA, conferring on it an open structure. The RuvB hexamer acts as an ATP-dependent pump, pulling dsDNA into and through the RuvAB complex. RuvB forms 2 homohexamers on either side of HJ DNA bound by 1 or 2 RuvA tetramers; 4 subunits per hexamer contact DNA at a time. Coordinated motions by a converter formed by DNA-disengaged RuvB subunits stimulates ATP hydrolysis and nucleotide exchange. Immobilization of the converter enables RuvB to convert the ATP-contained energy into a lever motion, pulling 2 nucleotides of DNA out of the RuvA tetramer per ATP hydrolyzed, thus driving DNA branch migration. The RuvB motors rotate together with the DNA substrate, which together with the progressing nucleotide cycle form the mechanistic basis for DNA recombination by continuous HJ branch migration. Branch migration allows RuvC to scan DNA until it finds its consensus sequence, where it cleaves and resolves cruciform DNA. In Exiguobacterium sp. (strain ATCC BAA-1283 / AT1b), this protein is Holliday junction branch migration complex subunit RuvB.